Consider the following 1063-residue polypeptide: Cellulose synthase A catalytic subunit 7 [UDP-forming] (1063 aa).

Topologically, residues methionine 1–arginine 213 are cytoplasmic. Residues cysteine 18, cysteine 21, cysteine 37, cysteine 40, cysteine 45, cysteine 48, cysteine 60, and cysteine 63 each coordinate Zn(2+). The segment at cysteine 18–asparagine 64 adopts an RING-type; degenerate zinc-finger fold. The segment at asparagine 116–glutamate 154 is disordered. Residues lysine 141–glutamate 154 are compositionally biased toward basic and acidic residues. The chain crosses the membrane as a helical span at residues isoleucine 214 to proline 234. Over alanine 235 to aspartate 237 the chain is Extracellular. The chain crosses the membrane as a helical span at residues alanine 238–leucine 258. Residues aspartate 259–serine 845 are Cytoplasmic-facing. Residues serine 297, lysine 303, glutamate 304, and aspartate 333 each contribute to the UDP-alpha-D-glucose site. Aspartate 333 is a catalytic residue. Residues valine 387–lysine 414 are a coiled coil. Position 474 (lysine 474) interacts with UDP-alpha-D-glucose. 2 residues coordinate Mn(2+): lysine 475 and aspartate 499. The active site involves aspartate 762. Residues isoleucine 846 to isoleucine 866 form a helical membrane-spanning segment. Residues proline 867–asparagine 871 lie on the Extracellular side of the membrane. Residues leucine 872–leucine 892 traverse the membrane as a helical segment. The Cytoplasmic segment spans residues arginine 893–glutamine 907. Residues phenylalanine 908–valine 928 form a helical membrane-spanning segment. The Extracellular portion of the chain corresponds to leucine 929–threonine 959. Asparagine 935 carries an N-linked (GlcNAc...) asparagine glycan. Residues threonine 960–valine 980 traverse the membrane as a helical segment. Residues serine 981 to tryptophan 991 lie on the Cytoplasmic side of the membrane. Residues glycine 992 to leucine 1012 traverse the membrane as a helical segment. At lysine 1013 to arginine 1021 the chain is on the extracellular side. A helical membrane pass occupies residues threonine 1022–valine 1042. The Cytoplasmic segment spans residues arginine 1043–cysteine 1063.

The protein belongs to the glycosyltransferase 2 family. Plant cellulose synthase subfamily. Mn(2+) serves as cofactor. It depends on Zn(2+) as a cofactor.

Its subcellular location is the cell membrane. The enzyme catalyses [(1-&gt;4)-beta-D-glucosyl](n) + UDP-alpha-D-glucose = [(1-&gt;4)-beta-D-glucosyl](n+1) + UDP + H(+). It functions in the pathway glycan metabolism; plant cellulose biosynthesis. Its function is as follows. Catalytic subunit of cellulose synthase terminal complexes ('rosettes'), required for beta-1,4-glucan microfibril crystallization, a major mechanism of the cell wall formation. Involved in the secondary cell wall formation. This chain is Cellulose synthase A catalytic subunit 7 [UDP-forming] (CESA7), found in Oryza sativa subsp. japonica (Rice).